The following is a 368-amino-acid chain: UDP-N-acetylglucosamine--N-acetylmuramyl-(pentapeptide) pyrophosphoryl-undecaprenol N-acetylglucosamine transferase (368 aa).

UDP-N-acetyl-alpha-D-glucosamine-binding positions include 13–15 (TGG), N127, R168, S200, I254, and Q299.

Belongs to the glycosyltransferase 28 family. MurG subfamily.

The protein resides in the cell inner membrane. It catalyses the reaction di-trans,octa-cis-undecaprenyl diphospho-N-acetyl-alpha-D-muramoyl-L-alanyl-D-glutamyl-meso-2,6-diaminopimeloyl-D-alanyl-D-alanine + UDP-N-acetyl-alpha-D-glucosamine = di-trans,octa-cis-undecaprenyl diphospho-[N-acetyl-alpha-D-glucosaminyl-(1-&gt;4)]-N-acetyl-alpha-D-muramoyl-L-alanyl-D-glutamyl-meso-2,6-diaminopimeloyl-D-alanyl-D-alanine + UDP + H(+). It participates in cell wall biogenesis; peptidoglycan biosynthesis. Functionally, cell wall formation. Catalyzes the transfer of a GlcNAc subunit on undecaprenyl-pyrophosphoryl-MurNAc-pentapeptide (lipid intermediate I) to form undecaprenyl-pyrophosphoryl-MurNAc-(pentapeptide)GlcNAc (lipid intermediate II). This chain is UDP-N-acetylglucosamine--N-acetylmuramyl-(pentapeptide) pyrophosphoryl-undecaprenol N-acetylglucosamine transferase, found in Parabacteroides distasonis (strain ATCC 8503 / DSM 20701 / CIP 104284 / JCM 5825 / NCTC 11152).